A 276-amino-acid chain; its full sequence is Digeranylgeranylglyceryl phosphate synthase (276 aa).

5 helical membrane passes run 14–34 (VNTL…GGAV), 90–110 (VVLF…AVCI), 144–164 (FVFG…AALA), 200–220 (ALAV…VPYL), and 221–241 (VGVF…VMVV).

This sequence belongs to the UbiA prenyltransferase family. DGGGP synthase subfamily. The cofactor is Mg(2+).

Its subcellular location is the cell membrane. The catalysed reaction is sn-3-O-(geranylgeranyl)glycerol 1-phosphate + (2E,6E,10E)-geranylgeranyl diphosphate = 2,3-bis-O-(geranylgeranyl)-sn-glycerol 1-phosphate + diphosphate. It functions in the pathway membrane lipid metabolism; glycerophospholipid metabolism. Functionally, prenyltransferase that catalyzes the transfer of the geranylgeranyl moiety of geranylgeranyl diphosphate (GGPP) to the C2 hydroxyl of (S)-3-O-geranylgeranylglyceryl phosphate (GGGP). This reaction is the second ether-bond-formation step in the biosynthesis of archaeal membrane lipids. The protein is Digeranylgeranylglyceryl phosphate synthase of Halobacterium salinarum (strain ATCC 29341 / DSM 671 / R1).